We begin with the raw amino-acid sequence, 141 residues long: Hemoglobin subunit alpha (141 aa).

Residues 1–141 (VLSSADKANI…VSTVLTSKYR (141 aa)) enclose the Globin domain. Serine 3 carries the phosphoserine modification. N6-succinyllysine is present on residues lysine 7 and lysine 11. Lysine 16 is modified (N6-acetyllysine; alternate). Lysine 16 is subject to N6-succinyllysine; alternate. Position 24 is a phosphotyrosine (tyrosine 24). An N6-succinyllysine modification is found at lysine 40. Serine 49 is modified (phosphoserine). An O2-binding site is contributed by histidine 58. Histidine 87 provides a ligand contact to heme b. Serine 102 is modified (phosphoserine). Threonine 108 carries the phosphothreonine modification. Serine 131 is subject to Phosphoserine. A phosphothreonine mark is found at threonine 134 and threonine 137. A Phosphoserine modification is found at serine 138.

It belongs to the globin family. As to quaternary structure, heterotetramer of two alpha chains and two beta chains. In terms of tissue distribution, red blood cells.

Its function is as follows. Involved in oxygen transport from the lung to the various peripheral tissues. In terms of biological role, hemopressin acts as an antagonist peptide of the cannabinoid receptor CNR1. Hemopressin-binding efficiently blocks cannabinoid receptor CNR1 and subsequent signaling. The chain is Hemoglobin subunit alpha (HBA) from Crocuta crocuta (Spotted hyena).